Reading from the N-terminus, the 340-residue chain is Delta(1)-pyrroline-2-carboxylate reductase 1 (340 aa).

S50 acts as the Charge relay system in catalysis. H51 functions as the Proton donor in the catalytic mechanism. R55 is a substrate binding site. 123 to 127 (HFSAL) is a binding site for NADP(+). T163 contributes to the substrate binding site. An NADP(+)-binding site is contributed by 181-183 (DFA). Residue 189–190 (RG) participates in substrate binding. D191 acts as the Charge relay system in catalysis. NADP(+)-binding positions include 232–233 (HK) and 307–313 (RLPSQRR).

It belongs to the LDH2/MDH2 oxidoreductase family. As to quaternary structure, homodimer.

The catalysed reaction is L-proline + NAD(+) = 1-pyrroline-2-carboxylate + NADH + H(+). It carries out the reaction L-proline + NADP(+) = 1-pyrroline-2-carboxylate + NADPH + H(+). Catalyzes the reduction of Delta(1)-pyrroline-2-carboxylate (Pyr2C) to L-proline, using NADPH as the electron donor. May be involved in a degradation pathway that converts trans-3-hydroxy-L-proline (t3LHyp) to L-proline. This chain is Delta(1)-pyrroline-2-carboxylate reductase 1, found in Burkholderia ambifaria (strain ATCC BAA-244 / DSM 16087 / CCUG 44356 / LMG 19182 / AMMD) (Burkholderia cepacia (strain AMMD)).